Reading from the N-terminus, the 456-residue chain is UDP-N-acetylmuramoylalanine--D-glutamate ligase (456 aa).

119 to 125 contacts ATP; it reads GSNGKTT.

The protein belongs to the MurCDEF family.

It localises to the cytoplasm. The enzyme catalyses UDP-N-acetyl-alpha-D-muramoyl-L-alanine + D-glutamate + ATP = UDP-N-acetyl-alpha-D-muramoyl-L-alanyl-D-glutamate + ADP + phosphate + H(+). Its pathway is cell wall biogenesis; peptidoglycan biosynthesis. Its function is as follows. Cell wall formation. Catalyzes the addition of glutamate to the nucleotide precursor UDP-N-acetylmuramoyl-L-alanine (UMA). This is UDP-N-acetylmuramoylalanine--D-glutamate ligase from Limosilactobacillus reuteri (strain DSM 20016) (Lactobacillus reuteri).